The following is a 1779-amino-acid chain: Fibronectin type III domain-containing protein 1 (1779 aa).

An N-terminal signal peptide occupies residues 1 to 29 (MAPEARASPRLLLRAALLLLAALLPVASS). Fibronectin type-III domains follow at residues 33–126 (PVDH…KAPR), 103–203 (PNKP…AEED), 207–302 (VPED…TPES), and 307–402 (APEN…IPTT). A compositionally biased stretch (polar residues) spans 400-413 (PTTSSTEASVQPNG). Disordered stretches follow at residues 400 to 442 (PTTS…MPPA), 459 to 1108 (NGVA…RNLD), 1120 to 1227 (EENT…KPNG), and 1330 to 1401 (PTTT…PPGT). A compositionally biased stretch (low complexity) spans 423–437 (QQPSSSAPKVAASSQ). A compositionally biased stretch (polar residues) spans 493-506 (NPRSSRLETLNQKQ). Over residues 534–554 (SRKEGMDRRGPSLDPHPHPRV) the composition is skewed to basic and acidic residues. Composition is skewed to polar residues over residues 557 to 570 (SASS…STDN) and 590 to 607 (SSGS…TSAP). Positions 629-640 (ASSSTSRQSHSS) are enriched in low complexity. Ser651 bears the Phosphoserine mark. The segment covering 676 to 694 (HASSSHTTSRTASSSHPSA) has biased composition (low complexity). Ser699 bears the Phosphoserine mark. The span at 707–720 (DSDRAAEDTIRRAE) shows a compositional bias: basic and acidic residues. 2 stretches are compositionally biased toward polar residues: residues 763–784 (PSVS…SLPA) and 861–875 (PLSS…STTD). A compositionally biased stretch (low complexity) spans 879–904 (PQTSPASTSRQPSPARPPASRSQPSP). Polar residues-rich tracts occupy residues 957–971 (APQN…TYED) and 1003–1020 (VGSQ…SQAG). Positions 1085–1097 (LSTSVKKWPSSSS) are enriched in low complexity. A compositionally biased stretch (basic and acidic residues) spans 1098–1108 (PRDKYADRNLD). 2 stretches are compositionally biased toward polar residues: residues 1147 to 1159 (NPAT…NTHS) and 1166 to 1177 (RAPSSYSSTTPM). Residues 1330–1389 (PTTTMPPSTTTTTVPPTTTLPPTTTTTRRTTTTRRTTTTRRPTTTTRATRRTTTTTTTPE) show a composition bias toward low complexity. The Fibronectin type-III 5 domain occupies 1543-1637 (APRNITVVAM…PSVSFVTESD (95 aa)). Asn1546 is a glycosylation site (N-linked (GlcNAc...) asparagine).

The protein localises to the secreted. In terms of biological role, may be an activator of G protein signaling. This is Fibronectin type III domain-containing protein 1 (Fndc1) from Rattus norvegicus (Rat).